Reading from the N-terminus, the 775-residue chain is Melanoma-associated antigen D1 (775 aa).

A disordered region spans residues 37-330 (SEAPPTSQAT…PARQTPSAWQ (294 aa)). Residues 39-50 (APPTSQATAAAS) are compositionally biased toward low complexity. Polar residues-rich tracts occupy residues 52–63 (PNASPQSSQPPT), 84–100 (KAQN…SQAR), 107–120 (KNQS…QNGT), 149–178 (GQNS…NQPK), 221–235 (AQTS…NVES), 247–258 (VNNLNVEENNSG), and 296–308 (LAWQ…QNQT). 19 tandem repeats follow at residues 292–297 (WQTPLA), 298–303 (WQNPSG), 304–309 (WQNQTA), 329–334 (WQNPVA), 335–340 (WQNPVI), 341–346 (WPNPVI), 347–352 (WQNPVI), 353–358 (WPNPIV), 359–364 (WPGPIV), 365–370 (WPNPMA), 371–376 (WQSTPG), 377–382 (WQSPPS), 383–388 (WQAPPS), 389–394 (WQSPQD), 395–400 (WQGPPD), 401–406 (WQVPPD), 407–412 (WSMPPD), 413–418 (WSFPSD), and 419–424 (WPFPPD). Residues 292-441 (WQTPLAWQNP…IPPDWQNLRP (150 aa)) form a 22 X 6 AA tandem repeats of W-[PQ]-X-P-X-X region. Positions 309 to 326 (ARQTPPAARQSPPARQTP) are enriched in low complexity. The tract at residues 374 to 409 (TPGWQSPPSWQAPPSWQSPQDWQGPPDWQVPPDWSM) is disordered. Positions 375 to 406 (PGWQSPPSWQAPPSWQSPQDWQGPPDWQVPPD) are enriched in low complexity. Residues 425–429 (WIPAD) form a 20; approximate repeat. 2 repeat units span residues 430-435 (WPIPPD) and 436-441 (WQNLRP). Positions 437 to 452 (QNLRPSPNLRSSSNSR) are enriched in low complexity. The tract at residues 437-463 (QNLRPSPNLRSSSNSRASQNQGPPQPR) is disordered. Residues 468–666 (LQERANKLVK…RDWTAQFMEA (199 aa)) form the MAGE domain.

As to quaternary structure, interacts with DLX5, DLX7 and MSX2 and forms homomultimers. Interacts with UNC5A. Interacts with TRIM28 and PJA1. Interacts with NGFR/p75NTR and RORA. Ubiquitously expressed in many adult tissues, except for the spleen. Expressed in osteoblastic and chondrogenic cell lines and also during embryonic development.

Its subcellular location is the nucleus. The protein localises to the cytoplasm. It is found in the cell membrane. Involved in the apoptotic response after nerve growth factor (NGF) binding in neuronal cells. Inhibits cell cycle progression, and facilitates NGFR-mediated apoptosis. May act as a regulator of the function of DLX family members. May enhance ubiquitin ligase activity of RING-type zinc finger-containing E3 ubiquitin-protein ligases. Proposed to act through recruitment and/or stabilization of the Ubl-conjugating enzyme (E2) at the E3:substrate complex. Plays a role in the circadian rhythm regulation. May act as RORA coregulator, modulating the expression of core clock genes such as BMAL1 and NFIL3, induced, or NR1D1, repressed. This chain is Melanoma-associated antigen D1 (Maged1), found in Mus musculus (Mouse).